The primary structure comprises 260 residues: Hemin import ATP-binding protein HmuV (260 aa).

The ABC transporter domain occupies 6 to 242 (LHADNLHYRA…VQLRACYQAD (237 aa)). ATP is bound at residue 38–45 (GPNGAGKS).

It belongs to the ABC transporter superfamily. Heme (hemin) importer (TC 3.A.1.14.5) family. In terms of assembly, the complex is composed of two ATP-binding proteins (HmuV), two transmembrane proteins (HmuU) and a solute-binding protein (HmuT).

Its subcellular location is the cell inner membrane. Its function is as follows. Part of the ABC transporter complex HmuTUV involved in hemin import. Responsible for energy coupling to the transport system. This is Hemin import ATP-binding protein HmuV from Sodalis glossinidius (strain morsitans).